The sequence spans 207 residues: B2 protein (207 aa).

The segment at 1-68 (MIDQEESNFN…FKTLPPAESL (68 aa)) is disordered. 2 stretches are compositionally biased toward low complexity: residues 8 to 26 (NFNF…QFHG) and 35 to 52 (KNNN…GENK). In terms of domain architecture, DCD spans 72-204 (ETVGGYIFVC…AISLLDIFEE (133 aa)).

The protein is B2 protein of Daucus carota (Wild carrot).